Consider the following 105-residue polypeptide: Large ribosomal subunit protein uL24 (105 aa).

It belongs to the universal ribosomal protein uL24 family. In terms of assembly, part of the 50S ribosomal subunit.

One of two assembly initiator proteins, it binds directly to the 5'-end of the 23S rRNA, where it nucleates assembly of the 50S subunit. In terms of biological role, one of the proteins that surrounds the polypeptide exit tunnel on the outside of the subunit. This Methylobacillus flagellatus (strain ATCC 51484 / DSM 6875 / VKM B-1610 / KT) protein is Large ribosomal subunit protein uL24.